The chain runs to 119 residues: Large ribosomal subunit protein uL22 (119 aa).

The protein belongs to the universal ribosomal protein uL22 family. Part of the 50S ribosomal subunit.

Functionally, this protein binds specifically to 23S rRNA; its binding is stimulated by other ribosomal proteins, e.g. L4, L17, and L20. It is important during the early stages of 50S assembly. It makes multiple contacts with different domains of the 23S rRNA in the assembled 50S subunit and ribosome. In terms of biological role, the globular domain of the protein is located near the polypeptide exit tunnel on the outside of the subunit, while an extended beta-hairpin is found that lines the wall of the exit tunnel in the center of the 70S ribosome. In Bifidobacterium animalis subsp. lactis (strain AD011), this protein is Large ribosomal subunit protein uL22.